The sequence spans 217 residues: Proteasome subunit beta (217 aa).

The propeptide at 1 to 14 (MIANNDQYKEYMKG) is removed in mature form; by autocatalysis. Threonine 15 acts as the Nucleophile in catalysis.

It belongs to the peptidase T1B family. In terms of assembly, the 20S proteasome core is composed of 14 alpha and 14 beta subunits that assemble into four stacked heptameric rings, resulting in a barrel-shaped structure. The two inner rings, each composed of seven catalytic beta subunits, are sandwiched by two outer rings, each composed of seven alpha subunits. The catalytic chamber with the active sites is on the inside of the barrel. Has a gated structure, the ends of the cylinder being occluded by the N-termini of the alpha-subunits. Is capped at one or both ends by the proteasome regulatory ATPase, PAN.

The protein resides in the cytoplasm. The catalysed reaction is Cleavage of peptide bonds with very broad specificity.. Its activity is regulated as follows. The formation of the proteasomal ATPase PAN-20S proteasome complex, via the docking of the C-termini of PAN into the intersubunit pockets in the alpha-rings, triggers opening of the gate for substrate entry. Interconversion between the open-gate and close-gate conformations leads to a dynamic regulation of the 20S proteasome proteolysis activity. Functionally, component of the proteasome core, a large protease complex with broad specificity involved in protein degradation. In Methanococcus aeolicus (strain ATCC BAA-1280 / DSM 17508 / OCM 812 / Nankai-3), this protein is Proteasome subunit beta.